The chain runs to 529 residues: Peptide chain release factor 3 (529 aa).

The tr-type G domain occupies 11-280 (SKRRTFAIIS…GLVAWAPAPM (270 aa)). GTP-binding positions include 20 to 27 (SHPDAGKT), 88 to 92 (DTPGH), and 142 to 145 (NKLD).

Belongs to the TRAFAC class translation factor GTPase superfamily. Classic translation factor GTPase family. PrfC subfamily.

It is found in the cytoplasm. Its function is as follows. Increases the formation of ribosomal termination complexes and stimulates activities of RF-1 and RF-2. It binds guanine nucleotides and has strong preference for UGA stop codons. It may interact directly with the ribosome. The stimulation of RF-1 and RF-2 is significantly reduced by GTP and GDP, but not by GMP. The protein is Peptide chain release factor 3 of Pectobacterium carotovorum subsp. carotovorum (strain PC1).